Reading from the N-terminus, the 297-residue chain is Acetyl-coenzyme A carboxylase carboxyl transferase subunit beta (297 aa).

Residues 27-296 enclose the CoA carboxyltransferase N-terminal domain; it reads LWHKCPSCEA…PVETSQVTAK (270 aa). 4 residues coordinate Zn(2+): Cys-31, Cys-34, Cys-50, and Cys-53. The C4-type zinc-finger motif lies at 31-53; sequence CPSCEAVLYRPELEKTLDVCPKC.

The protein belongs to the AccD/PCCB family. Acetyl-CoA carboxylase is a heterohexamer composed of biotin carboxyl carrier protein (AccB), biotin carboxylase (AccC) and two subunits each of ACCase subunit alpha (AccA) and ACCase subunit beta (AccD). Zn(2+) serves as cofactor.

It is found in the cytoplasm. It catalyses the reaction N(6)-carboxybiotinyl-L-lysyl-[protein] + acetyl-CoA = N(6)-biotinyl-L-lysyl-[protein] + malonyl-CoA. It participates in lipid metabolism; malonyl-CoA biosynthesis; malonyl-CoA from acetyl-CoA: step 1/1. In terms of biological role, component of the acetyl coenzyme A carboxylase (ACC) complex. Biotin carboxylase (BC) catalyzes the carboxylation of biotin on its carrier protein (BCCP) and then the CO(2) group is transferred by the transcarboxylase to acetyl-CoA to form malonyl-CoA. The sequence is that of Acetyl-coenzyme A carboxylase carboxyl transferase subunit beta from Stutzerimonas stutzeri (strain A1501) (Pseudomonas stutzeri).